A 562-amino-acid polypeptide reads, in one-letter code: tRNA (guanine(37)-N(1))-methyltransferase (562 aa).

Residues M1–G41 constitute a mitochondrion transit peptide. S-adenosyl-L-methionine contacts are provided by residues H243, D281–L282, and N340. The segment covering A523 to P534 has biased composition (basic and acidic residues). Residues A523–M562 are disordered.

The protein belongs to the class I-like SAM-binding methyltransferase superfamily. TRM5/TYW2 family. As to quaternary structure, monomer.

Its subcellular location is the mitochondrion matrix. The protein localises to the nucleus. It localises to the cytoplasm. It catalyses the reaction guanosine(37) in tRNA + S-adenosyl-L-methionine = N(1)-methylguanosine(37) in tRNA + S-adenosyl-L-homocysteine + H(+). Functionally, specifically methylates the N1 position of guanosine-37 in various cytoplasmic and mitochondrial tRNAs. Methylation is not dependent on the nature of the nucleoside 5' of the target nucleoside. This is the first step in the biosynthesis of wybutosine (yW), a modified base adjacent to the anticodon of tRNAs and required for accurate decoding. In Aedes aegypti (Yellowfever mosquito), this protein is tRNA (guanine(37)-N(1))-methyltransferase.